Here is a 243-residue protein sequence, read N- to C-terminus: Transmembrane protein 174 (243 aa).

2 helical membrane-spanning segments follow: residues 40-60 (LLFS…MGWI) and 73-93 (LLGP…VCKF).

Interacts with SLC34A1; regulates SLC34A1 internalization by PTH and FGF23.

The protein resides in the endoplasmic reticulum membrane. The protein localises to the apical cell membrane. Regulator of plasma phosphate homeostasis. Decreases serum inorganic phosphate (Pi) uptake by regulating the sodium-phosphate cotransporter SLC34A1 trafficking by PTH and FGF23 in the kidney. The sequence is that of Transmembrane protein 174 (TMEM174) from Pongo abelii (Sumatran orangutan).